A 354-amino-acid polypeptide reads, in one-letter code: Selenide, water dikinase (354 aa).

The active site involves Cys-23. ATP is bound by residues Lys-26 and 54–56 (TSD). Asp-57 provides a ligand contact to Mg(2+). ATP-binding positions include Asp-74, Asp-97, and 145–147 (GHS). Asp-97 serves as a coordination point for Mg(2+). Asp-233 contributes to the Mg(2+) binding site.

This sequence belongs to the selenophosphate synthase 1 family. Class I subfamily. Homodimer. It depends on Mg(2+) as a cofactor.

It catalyses the reaction hydrogenselenide + ATP + H2O = selenophosphate + AMP + phosphate + 2 H(+). Synthesizes selenophosphate from selenide and ATP. In Burkholderia orbicola (strain MC0-3), this protein is Selenide, water dikinase.